A 91-amino-acid polypeptide reads, in one-letter code: Small ribosomal subunit protein bS20 (91 aa).

Positions 1 to 21 are enriched in basic and acidic residues; that stretch reads MPLHKSAEKRLRQSARRNERN. Disordered regions lie at residues 1 to 25 and 71 to 91; these read MPLHKSAEKRLRQSARRNERNRARK and NKASRKKSQLSRMLNAYAQKD.

Belongs to the bacterial ribosomal protein bS20 family.

In terms of biological role, binds directly to 16S ribosomal RNA. The sequence is that of Small ribosomal subunit protein bS20 from Prosthecochloris aestuarii (strain DSM 271 / SK 413).